Consider the following 63-residue polypeptide: Large ribosomal subunit protein bL35 (63 aa).

The disordered stretch occupies residues 1 to 22 (MPKMKTKSGATKRFKKTATGFK).

The protein belongs to the bacterial ribosomal protein bL35 family.

This Marinobacter nauticus (strain ATCC 700491 / DSM 11845 / VT8) (Marinobacter aquaeolei) protein is Large ribosomal subunit protein bL35.